A 721-amino-acid polypeptide reads, in one-letter code: Polyphosphate kinase (721 aa).

Asn-54 is a binding site for ATP. Mg(2+) is bound by residues Arg-379 and Arg-409. Residues 434–468 (THLKTHSKIALVVKRIGGELTSFVHLGTGNYNDKT) enclose the PLD phosphodiesterase domain. The Phosphohistidine intermediate role is filled by His-439. Residues Tyr-472, Arg-568, and His-596 each contribute to the ATP site.

Belongs to the polyphosphate kinase 1 (PPK1) family. Requires Mg(2+) as cofactor. In terms of processing, an intermediate of this reaction is the autophosphorylated ppk in which a phosphate is covalently linked to a histidine residue through a N-P bond.

The enzyme catalyses [phosphate](n) + ATP = [phosphate](n+1) + ADP. Functionally, catalyzes the reversible transfer of the terminal phosphate of ATP to form a long-chain polyphosphate (polyP). This is Polyphosphate kinase from Staphylococcus haemolyticus (strain JCSC1435).